A 338-amino-acid chain; its full sequence is Aspartate-semialdehyde dehydrogenase (338 aa).

NADP(+) is bound by residues 13-16 and 41-42; these read SGAV and RS. Residue arginine 101 participates in phosphate binding. Cysteine 132 (acyl-thioester intermediate) is an active-site residue. Glutamine 159 lines the substrate pocket. 162-163 is an NADP(+) binding site; that stretch reads SG. Lysine 216 is a phosphate binding site. Residue arginine 238 coordinates substrate. Residue histidine 245 is the Proton acceptor of the active site. NADP(+) is bound at residue asparagine 317.

Belongs to the aspartate-semialdehyde dehydrogenase family. As to quaternary structure, homodimer.

The enzyme catalyses L-aspartate 4-semialdehyde + phosphate + NADP(+) = 4-phospho-L-aspartate + NADPH + H(+). It participates in amino-acid biosynthesis; L-lysine biosynthesis via DAP pathway; (S)-tetrahydrodipicolinate from L-aspartate: step 2/4. Its pathway is amino-acid biosynthesis; L-methionine biosynthesis via de novo pathway; L-homoserine from L-aspartate: step 2/3. The protein operates within amino-acid biosynthesis; L-threonine biosynthesis; L-threonine from L-aspartate: step 2/5. Functionally, catalyzes the NADPH-dependent formation of L-aspartate-semialdehyde (L-ASA) by the reductive dephosphorylation of L-aspartyl-4-phosphate. The polypeptide is Aspartate-semialdehyde dehydrogenase (Shewanella violacea (strain JCM 10179 / CIP 106290 / LMG 19151 / DSS12)).